Consider the following 276-residue polypeptide: NADPH-dependent 7-cyano-7-deazaguanine reductase (276 aa).

Residue 83 to 85 coordinates substrate; that stretch reads IES. Residue 85-86 participates in NADPH binding; sequence SK. Residue Cys-184 is the Thioimide intermediate of the active site. Asp-191 serves as the catalytic Proton donor. Residue 223 to 224 coordinates substrate; sequence HE. Residue 252–253 coordinates NADPH; the sequence is RG.

It belongs to the GTP cyclohydrolase I family. QueF type 2 subfamily. Homodimer.

It is found in the cytoplasm. It carries out the reaction 7-aminomethyl-7-carbaguanine + 2 NADP(+) = 7-cyano-7-deazaguanine + 2 NADPH + 3 H(+). The protein operates within tRNA modification; tRNA-queuosine biosynthesis. In terms of biological role, catalyzes the NADPH-dependent reduction of 7-cyano-7-deazaguanine (preQ0) to 7-aminomethyl-7-deazaguanine (preQ1). This Pseudomonas fluorescens (strain ATCC BAA-477 / NRRL B-23932 / Pf-5) protein is NADPH-dependent 7-cyano-7-deazaguanine reductase.